An 839-amino-acid polypeptide reads, in one-letter code: MPKGPKQQPPEPEWIGDGEGTSPADKVVKKGKKDKKTKKTFFEELAVEDKQAGEEEKLQKEKEQQQQQQQQKKKRDTRKGRRKKDVDDDDDGDERVLMERLKQLSVPASDEEDEVPVPVPRGRKKAKGGNVFEALIQDESEEEKEEEEEKPVLKPAKPEKNRINKAVAEEPPGLRNKKGKEEKSKGKAKNKPSATDSEGEDDEDMTKEKEPPRPGKDKDKKGAEQGSEEEKEEKEGEVKANDPYAHLSKKEKKKLKKQMDYERQVESLKAANAAENDFSVSQAEVSSRQAMLENASDIKLEKFSISAHGKELFVNADLYIVAGRRYGLVGPNGKGKTTLLKHIANRALSIPPNIDVLLCEQEVVADETPAVQAVLRADTKRLRLLEEEKRLQGQLEQGDDTAAEKLEKVYEELRATGAAAAEAKARRILAGLGFDPEMQNRPTQKFSGGWRMRVSLARALFMEPTLLMLDEPTNHLDLNAVIWLNNYLQGWRKTLLIVSHDQGFLDDVCTDIIHLDTQRLHYYRGNYMTFKKMYQQKQKELLKQYEKQEKKLKELKAGGKSTKQAEKQTKEVLTRKQQKCRRKNQDEESQDPPELLKRPREYTVRFTFPDPPPLSPPVLGLHGVTFGYEGQKPLFKNLDFGIDMDSRICIVGPNGVGKSTLLLLLTGKLTPTNGEMRKNHRLKIGFFNQQYAEQLHMEETPTEYLQRGFNLPYQDARKCLGRFGLESHAHTIQICKLSGGQKARVVFAELACREPDVLILDEPTNNLDIESIDALGEAINEYKGAVIVVSHDARLITETNCQLWVVEEQSVSQIDGDFDDYKREVLEALGEVMVNRPRD.

The segment at 1–258 is disordered; sequence MPKGPKQQPP…KKEKKKLKKQ (258 aa). A Phosphoserine modification is found at S22. Residues 29-39 are compositionally biased toward basic residues; it reads KKGKKDKKTKK. The span at 47–64 shows a compositional bias: basic and acidic residues; sequence VEDKQAGEEEKLQKEKEQ. Residues 71–83 show a composition bias toward basic residues; the sequence is QKKKRDTRKGRRK. Phosphoserine is present on residues S105, S109, and S140. Residues 136–149 are compositionally biased toward acidic residues; it reads IQDESEEEKEEEEE. Basic and acidic residues predominate over residues 150–162; that stretch reads KPVLKPAKPEKNR. At T195 the chain carries Phosphothreonine. S197 is subject to Phosphoserine. Basic and acidic residues predominate over residues 206 to 223; sequence TKEKEPPRPGKDKDKKGA. At S227 the chain carries Phosphoserine. Residues 247–256 show a composition bias toward basic residues; sequence LSKKEKKKLK. In terms of domain architecture, ABC transporter 1 spans 298 to 542; the sequence is IKLEKFSISA…MYQQKQKELL (245 aa). 330-337 is a binding site for ATP; the sequence is GPNGKGKT. Basic and acidic residues predominate over residues 553–574; that stretch reads KELKAGGKSTKQAEKQTKEVLT. The tract at residues 553–600 is disordered; sequence KELKAGGKSTKQAEKQTKEVLTRKQQKCRRKNQDEESQDPPELLKRPR. S589 carries the phosphoserine modification. In terms of domain architecture, ABC transporter 2 spans 619–834; sequence LGLHGVTFGY…VLEALGEVMV (216 aa). 652-659 is an ATP binding site; sequence GPNGVGKS.

In terms of assembly, interacts (via N-terminus) with EIF2S1; the interaction is independent of its phosphorylated status. Associates (via both ABC transporter domains) with the ribosomes. Phosphorylated at phosphoserine and phosphothreonine. Phosphorylation on Ser-109 and Ser-140 by CK2; inhibits association of EIF2 with ribosomes.

Its subcellular location is the cytoplasm. The protein localises to the nucleus. It is found in the nucleoplasm. It localises to the nucleus envelope. Required for efficient Cap- and IRES-mediated mRNA translation initiation. Not involved in the ribosome biogenesis. The chain is ATP-binding cassette sub-family F member 1 (Abcf1) from Rattus norvegicus (Rat).